The following is a 276-amino-acid chain: Rhomboid protease GlpG (276 aa).

6 consecutive transmembrane segments (helical) span residues 94–114 (GPFT…QNLL), 142–162 (AFMH…WYLG), 169–189 (IGSG…GFVQ), 192–212 (FSGP…GYVW), 229–249 (LILF…GMAI), and 252–272 (GAHV…TLHG). The active-site Nucleophile is S201. H254 is a catalytic residue.

Belongs to the peptidase S54 family.

It is found in the cell inner membrane. It catalyses the reaction Cleaves type-1 transmembrane domains using a catalytic dyad composed of serine and histidine that are contributed by different transmembrane domains.. Rhomboid-type serine protease that catalyzes intramembrane proteolysis. The sequence is that of Rhomboid protease GlpG from Klebsiella pneumoniae subsp. pneumoniae (strain ATCC 700721 / MGH 78578).